The following is a 2387-amino-acid chain: Paternally-expressed gene 3 protein (2387 aa).

Positions 44–126 constitute an SCAN box domain; sequence HQRFRNFLYV…ALLEDYEAMY (83 aa). Disordered stretches follow at residues 127–194, 262–305, 321–371, and 392–423; these read EPED…RDLA, DGHS…ICEA, ARSS…AFGG, and RYHFDAEGQGPVHDPRGGARKRPFECGGEARR. Basic and acidic residues-rich tracts occupy residues 160–179, 291–305, 321–364, and 404–423; these read SERERRRGRSRDMESRDRWP, PETKKSAHRRGICEA, ARSS…ERGP, and HDPRGGARKRPFECGGEARR. A C2H2-type 1 zinc finger spans residues 451–473; it reads YVCDECGRSFAVISEFVEHQIVH. Residues 492 to 542 are disordered; that stretch reads SEAQSRPEGARRSEGAQAAGLAEHRGGQAQEHLRGSGDEEQDEPFLPSPTF. The segment covering 513–528 has biased composition (basic and acidic residues); the sequence is AEHRGGQAQEHLRGSG. C2H2-type zinc fingers lie at residues 555-577 and 610-632; these read YECKVCKETFLHSSALIEHQKIH and YECKVCGETFHHSAALREHQKTH. The segment at 668–690 adopts a C2H2-type 4; degenerate zinc-finger fold; sequence YDFREGGDAFGRSSDFMEHQKIH. Disordered stretches follow at residues 704 to 747, 764 to 797, and 820 to 858; these read PLLH…EARG, FRPPRGLREDGEPSTYLSGLRDPPQKTPAWESPY, and DHLAGEGPSGWQRDGEASGPSSDGRQHQKARAKKKNIER. Polar residues predominate over residues 711-720; it reads MPGSQKSHTI. Residues 846–856 show a composition bias toward basic residues; that stretch reads HQKARAKKKNI. A C2H2-type 5 zinc finger spans residues 884-906; sequence YECLECGEFFVRSSELAEHQKIH. Tandem repeats lie at residues 965-973, 974-982, 983-991, 1001-1009, 1010-1018, 1028-1036, 1046-1054, 1055-1063, 1073-1081, 1091-1099, 1109-1117, 1118-1126, 1136-1144, 1145-1153, 1154-1162, 1163-1171, 1172-1180, 1190-1198, 1199-1207, 1217-1225, 1235-1243, 1253-1261, 1280-1288, 1289-1297, 1298-1306, 1307-1315, 1316-1324, 1325-1333, 1334-1342, 1343-1351, 1352-1360, 1361-1369, 1370-1378, 1379-1387, 1388-1396, 1397-1405, 1406-1414, 1415-1423, 1424-1432, 1433-1441, 1442-1450, 1451-1459, 1460-1468, 1469-1477, 1478-1486, 1496-1504, 1505-1513, 1514-1522, 1523-1531, 1532-1540, 1541-1549, 1550-1558, 1559-1567, 1568-1576, 1577-1585, 1586-1594, and 1595-1603. 2 stretches are compositionally biased toward polar residues: residues 965–989 and 1001–1020; these read PAQTSYAVEPAQTSYAEEPAQTSYT and PAQTSCIEEPAQTSYTNPAA. Residues 965–1603 form a 37 X 9 AA repeat of P-A-Q-T-X-Y-X-X-E region; that stretch reads PAQTSYAVEP…EPAQTSYSEE (639 aa). The tract at residues 965–1651 is disordered; the sequence is PAQTSYAVEP…RPDMPRNQPR (687 aa). Over residues 1046–1079 the composition is skewed to polar residues; it reads PAQTSCIEEPAQTSYTNPAAETSYTEEPAQTSYT. Composition is skewed to polar residues over residues 1107 to 1178, 1190 to 1206, 1217 to 1242, 1251 to 1484, and 1496 to 1601; these read EEPS…TSYT, PAQTSCIEEPAQTNYTK, PAQTSYTDPAAETSYTEEPAQTNYTV, EEPS…TNYT, and PAQT…TSYS. The segment at 1859 to 1881 adopts a C2H2-type 6; degenerate zinc-finger fold; it reads NECKECGECFATVEDLGRHQKIY. The disordered stretch occupies residues 1900–1921; sequence LGLDGSPEEELEEQEEPEEPED. Residues 1905–1921 are compositionally biased toward acidic residues; sequence SPEEELEEQEEPEEPED. C2H2-type zinc fingers lie at residues 1924–1946, 1980–2002, 2040–2062, 2097–2119, and 2148–2170; these read YGCKDCGLGFADRADLRDHQKVH, YECPACGESFVHSSFLFEHQKVH, PQCQVCGQDFIHASVLSEHARGH, YECETCGESFPSQADLQEHMRVH, and YECKDCGKSFIHSTILTKHQKLH. Residues 2059–2102 form a disordered region; the sequence is ARGHAGEGLPDQGQGGAGAAGPGPAPTEPQQDPGEEQRYECETC. Residues 2204 to 2322 form a disordered region; that stretch reads NVEAAEPEVE…DCGECGETFP (119 aa). Composition is skewed to acidic residues over residues 2208 to 2228 and 2257 to 2311; these read AEPEVEAAEPEVEAAEPEVEA and EQPD…EEPY. C2H2-type zinc fingers lie at residues 2312-2334 and 2363-2385; these read YDCGECGETFPSGAAYAEHLTAH and FKCDVCGQLFSDRLSLARHQNTH.

This sequence belongs to the krueppel C2H2-type zinc-finger protein family. In terms of assembly, homodimer. Interacts with SIAH1A and SIAH2. Interacts with TRAF2. Expressed at high levels in the cerebellum and at moderate levels in the testis and ovary.

The protein localises to the nucleus. Its subcellular location is the cytoplasm. Functionally, induces apoptosis in cooperation with SIAH1A. Acts as a mediator between p53/TP53 and BAX in a neuronal death pathway that is activated by DNA damage. Acts synergistically with TRAF2 and inhibits TNF induced apoptosis through activation of NF-kappa-B. This chain is Paternally-expressed gene 3 protein (PEG3), found in Bos taurus (Bovine).